Here is a 298-residue protein sequence, read N- to C-terminus: Probable 2-(5''-triphosphoribosyl)-3'-dephosphocoenzyme-A synthase (298 aa).

Belongs to the CitG/MdcB family.

The catalysed reaction is 3'-dephospho-CoA + ATP = 2'-(5''-triphospho-alpha-D-ribosyl)-3'-dephospho-CoA + adenine. This chain is Probable 2-(5''-triphosphoribosyl)-3'-dephosphocoenzyme-A synthase, found in Salmonella arizonae (strain ATCC BAA-731 / CDC346-86 / RSK2980).